Consider the following 347-residue polypeptide: Metacaspase-2 (347 aa).

The tract at residues 1–70 (MCSLITQLCD…QPWVATPLPG (70 aa)) is regulates substrate access to the active site. Residue histidine 158 is part of the active site. 3 residues coordinate Ca(2+): aspartate 173, aspartate 189, and aspartate 190. Residue cysteine 213 is part of the active site. A Ca(2+)-binding site is contributed by aspartate 220.

This sequence belongs to the peptidase C14B family. In terms of assembly, monomer. Post-translationally, auto-proteolytic cleavage of the propeptide after Lys-55 and between the large and small subunits after Lys-268 is required for catalytic activity towards large protein substrates but is dispensable towards small oligopeptide substrates. After processing, the propeptide and the large and small subunits remain associated by non-covalent bonds. In vivo, the unprocessed enzyme appears to be the predominant form.

The protein resides in the recycling endosome. With respect to regulation, activated by Ca(2+). In response to calcium binding, the 280-loop, the 280-loop, a disordered loop consisting of residues 269-275, undergoes a conformational change which stabilizes substrates in the active site. The binding to the substrate triggers the release of the N-terminal region resulting in the activation of the enzyme. Proteolytic cleavage is required for catalytic activity towards large protein substrates. Cysteine protease that cleaves specifically after arginine or lysine residues. In Trypanosoma brucei brucei, this protein is Metacaspase-2.